The chain runs to 259 residues: Anti-Pycsar protein Apyc1 (259 aa).

Positions 21 to 233 (YNNSALVTFT…KQQNKIFLMH (213 aa)) are beta-lactamase-like. 7 residues coordinate Zn(2+): histidine 64, histidine 66, aspartate 68, histidine 69, histidine 154, aspartate 178, and histidine 233.

Belongs to the anti-Pycsar protein Apyc1 family. As to quaternary structure, homodimer. Zn(2+) is required as a cofactor.

The enzyme catalyses 3',5'-cyclic CMP + H2O = CMP + H(+). The catalysed reaction is 3',5'-cyclic UMP + H2O = UMP + H(+). Functionally, counteracts the host Pycsar antiviral defense system. Phosphodiesterase that enables metal-dependent hydrolysis of host cyclic nucleotide Pycsar defense signals such as cCMP and cUMP. This is Anti-Pycsar protein Apyc1 from Bacillus subtilis.